The sequence spans 214 residues: Holliday junction branch migration complex subunit RuvA (214 aa).

Residues 1-64 (MITRIRGEML…EDAMTLYGFT (64 aa)) are domain I. Residues 65–143 (SGEQLAVFEL…DITSKDAYQD (79 aa)) are domain II. A flexible linker region spans residues 144–160 (ISASEKLDNTGEKLGIS). A domain III region spans residues 161–214 (TRHKHLDELKAALSSLGYTNREIEKTVDAIQGQITEGQDMEELLRLALQKLNTK).

It belongs to the RuvA family. In terms of assembly, homotetramer. Forms an RuvA(8)-RuvB(12)-Holliday junction (HJ) complex. HJ DNA is sandwiched between 2 RuvA tetramers; dsDNA enters through RuvA and exits via RuvB. An RuvB hexamer assembles on each DNA strand where it exits the tetramer. Each RuvB hexamer is contacted by two RuvA subunits (via domain III) on 2 adjacent RuvB subunits; this complex drives branch migration. In the full resolvosome a probable DNA-RuvA(4)-RuvB(12)-RuvC(2) complex forms which resolves the HJ.

Its subcellular location is the cytoplasm. The RuvA-RuvB-RuvC complex processes Holliday junction (HJ) DNA during genetic recombination and DNA repair, while the RuvA-RuvB complex plays an important role in the rescue of blocked DNA replication forks via replication fork reversal (RFR). RuvA specifically binds to HJ cruciform DNA, conferring on it an open structure. The RuvB hexamer acts as an ATP-dependent pump, pulling dsDNA into and through the RuvAB complex. HJ branch migration allows RuvC to scan DNA until it finds its consensus sequence, where it cleaves and resolves the cruciform DNA. The protein is Holliday junction branch migration complex subunit RuvA of Natranaerobius thermophilus (strain ATCC BAA-1301 / DSM 18059 / JW/NM-WN-LF).